Here is a 762-residue protein sequence, read N- to C-terminus: MALPALGLDSWSFLGLFLFQLLLLFLPPATTAGREGQGPTPRVKYHAGDGRRALSFFHQKGLQDFDTLLLSDDGGTLYVGAREAILALNIEDPGVPRLKNMIPWPASDRKKSECAFKRKSNETQCFNFIRVLVSFNSTHLYACGTFAFSPACTFIELQDSRLLPISEDRVVEGKGQSPFDPTHKHTAVMADGMLYSGTMNNFLGSEPILLRTLGSQPVLKTDNFLRWLQPDASFVAAIPSTQVVYFFFEETASEFEFFEKLRISRVAQVCKNDVGGEKLLQKKWTTFLKAQLLCTQPEQLPFNVIRHAVLQADNSSTDPQVYAVFTSQWHVGGTRSSAVCAFSLKDIKSVFEGKYKELDKETSRWTTYEYPDISPRPGSCSKGPSSDKALTFMKDHFLMDEPVVGTPLLVKSGVEYTWLAVETAQGIDGQSHLVMYLGTSTGSLHKAVVSGDHSAYLVEEIQLFPDPEPVRNLQLAPTQGAVFVGFSGGIWKVPRANCSVYESCMDCVLARDPHCAWDPESQTCRLLPTPILKSWKQDMQQGNPEWACASGPMGRSLGPRSRPQIIKEVLAVPNSILELPCPQSSALASYHWSHGVEAIPEAPSTVYNGSLLLLLRDGAGGLYQCWATENDFSYPVVSYWVHSQDQPLALDPKLAGIPRERMEAPLTRVGGGAALAAPKSYWPHFLTVTVLLALVLSGALVTFLVSPLGALRARGKVQGCGTLPSREKAPLSSEQCLQPSKEGRTSASDMDADNNLQGTEVA.

The first 32 residues, 1–32, serve as a signal peptide directing secretion; it reads MALPALGLDSWSFLGLFLFQLLLLFLPPATTA. The Extracellular portion of the chain corresponds to 33–684; it reads GREGQGPTPR…LAAPKSYWPH (652 aa). The 459-residue stretch at 37-495 folds into the Sema domain; that stretch reads QGPTPRVKYH…FSGGIWKVPR (459 aa). An intrachain disulfide couples C114 to C125. N-linked (GlcNAc...) asparagine glycosylation is found at N121 and N136. Intrachain disulfides connect C143–C152, C270–C380, and C294–C340. 2 N-linked (GlcNAc...) asparagine glycosylation sites follow: N314 and N497. The 48-residue stretch at 497-544 folds into the PSI domain; the sequence is NCSVYESCMDCVLARDPHCAWDPESQTCRLLPTPILKSWKQDMQQGNP. Intrachain disulfides connect C498–C515 and C507–C524. The region spanning 574 to 632 is the Ig-like C2-type domain; sequence NSILELPCPQSSALASYHWSHGVEAIPEAPSTVYNGSLLLLLRDGAGGLYQCWATENDF. The N-linked (GlcNAc...) asparagine glycan is linked to N608. Residues 685-705 form a helical membrane-spanning segment; that stretch reads FLTVTVLLALVLSGALVTFLV. Residues 706–762 are Cytoplasmic-facing; the sequence is SPLGALRARGKVQGCGTLPSREKAPLSSEQCLQPSKEGRTSASDMDADNNLQGTEVA. The disordered stretch occupies residues 722-762; it reads TLPSREKAPLSSEQCLQPSKEGRTSASDMDADNNLQGTEVA.

It belongs to the semaphorin family. Interacts with PLXNB1, PLXNB2, PLXNB3, PLXND1 and TIMD2.

It localises to the cell membrane. In terms of biological role, cell surface receptor for PLXNB1, PLXNB2, PLXNB3 and PLXND1 that plays an important role in cell-cell signaling. Regulates glutamatergic and GABAergic synapse development. Promotes the development of inhibitory synapses in a PLXNB1-dependent manner and promotes the development of excitatory synapses in a PLXNB2-dependent manner. Plays a role in priming antigen-specific T-cells, promotes differentiation of Th1 T-helper cells, and thereby contributes to adaptive immunity. Promotes phosphorylation of TIMD2. Inhibits angiogenesis. Promotes axon growth cone collapse. Inhibits axonal extension by providing local signals to specify territories inaccessible for growing axons. This Bos taurus (Bovine) protein is Semaphorin-4A (SEMA4A).